The sequence spans 715 residues: Fatty acid oxidation complex subunit alpha (715 aa).

An enoyl-CoA hydratase/isomerase region spans residues 1-190 (MIYEGKAITV…KVGAVDAVVA (190 aa)). Asp-297 serves as a coordination point for substrate. Residues 312 to 715 (KDVKQAAVLG…MAKNGQSFFG (404 aa)) form a 3-hydroxyacyl-CoA dehydrogenase region. Residues Met-325, Asp-344, 401 to 403 (VVE), Lys-408, and Ser-430 each bind NAD(+). The active-site For 3-hydroxyacyl-CoA dehydrogenase activity is His-451. An NAD(+)-binding site is contributed by Asn-454. Asn-501 and Tyr-660 together coordinate substrate.

The protein in the N-terminal section; belongs to the enoyl-CoA hydratase/isomerase family. It in the C-terminal section; belongs to the 3-hydroxyacyl-CoA dehydrogenase family. As to quaternary structure, heterotetramer of two alpha chains (FadB) and two beta chains (FadA).

It carries out the reaction a (3S)-3-hydroxyacyl-CoA + NAD(+) = a 3-oxoacyl-CoA + NADH + H(+). It catalyses the reaction a (3S)-3-hydroxyacyl-CoA = a (2E)-enoyl-CoA + H2O. The enzyme catalyses a 4-saturated-(3S)-3-hydroxyacyl-CoA = a (3E)-enoyl-CoA + H2O. The catalysed reaction is (3S)-3-hydroxybutanoyl-CoA = (3R)-3-hydroxybutanoyl-CoA. It carries out the reaction a (3Z)-enoyl-CoA = a 4-saturated (2E)-enoyl-CoA. It catalyses the reaction a (3E)-enoyl-CoA = a 4-saturated (2E)-enoyl-CoA. The protein operates within lipid metabolism; fatty acid beta-oxidation. In terms of biological role, involved in the aerobic and anaerobic degradation of long-chain fatty acids via beta-oxidation cycle. Catalyzes the formation of 3-oxoacyl-CoA from enoyl-CoA via L-3-hydroxyacyl-CoA. It can also use D-3-hydroxyacyl-CoA and cis-3-enoyl-CoA as substrate. This chain is Fatty acid oxidation complex subunit alpha, found in Pseudomonas fluorescens (strain Pf0-1).